A 321-amino-acid chain; its full sequence is GTP 3',8-cyclase (321 aa).

The 229-residue stretch at 5 to 233 (SFNRVIDYIR…QGSSKIYTLE (229 aa)) folds into the Radical SAM core domain. Position 14 (Arg14) interacts with GTP. Residues Cys21 and Cys25 each coordinate [4Fe-4S] cluster. Tyr27 serves as a coordination point for S-adenosyl-L-methionine. Cys28 lines the [4Fe-4S] cluster pocket. GTP is bound at residue Arg64. Gly68 contacts S-adenosyl-L-methionine. Ser95 provides a ligand contact to GTP. An S-adenosyl-L-methionine-binding site is contributed by Ser119. Lys155 lines the GTP pocket. Met189 serves as a coordination point for S-adenosyl-L-methionine. Positions 249 and 252 each coordinate [4Fe-4S] cluster. 254 to 256 (RIR) contacts GTP. Cys266 serves as a coordination point for [4Fe-4S] cluster.

It belongs to the radical SAM superfamily. MoaA family. As to quaternary structure, monomer and homodimer. It depends on [4Fe-4S] cluster as a cofactor.

The catalysed reaction is GTP + AH2 + S-adenosyl-L-methionine = (8S)-3',8-cyclo-7,8-dihydroguanosine 5'-triphosphate + 5'-deoxyadenosine + L-methionine + A + H(+). It functions in the pathway cofactor biosynthesis; molybdopterin biosynthesis. Catalyzes the cyclization of GTP to (8S)-3',8-cyclo-7,8-dihydroguanosine 5'-triphosphate. The protein is GTP 3',8-cyclase of Helicobacter pylori (strain J99 / ATCC 700824) (Campylobacter pylori J99).